We begin with the raw amino-acid sequence, 127 residues long: Putative truncated L-serine dehydratase YIL168W (127 aa).

Lysine 39 bears the N6-(pyridoxal phosphate)lysine mark.

It belongs to the serine/threonine dehydratase family. It depends on pyridoxal 5'-phosphate as a cofactor.

Its subcellular location is the cytoplasm. The enzyme catalyses L-serine = pyruvate + NH4(+). It participates in carbohydrate biosynthesis; gluconeogenesis. This chain is Putative truncated L-serine dehydratase YIL168W, found in Saccharomyces cerevisiae (strain ATCC 204508 / S288c) (Baker's yeast).